A 200-amino-acid polypeptide reads, in one-letter code: Transcription elongation factor A protein-like 3 (200 aa).

Residues 1 to 200 are disordered; that stretch reads MEKPYNKNEG…QRGLHDIPYL (200 aa). The segment covering 20–36 has biased composition (acidic residues); that stretch reads DEVEPDDEGKSDEEEKP. Residue S30 is modified to Phosphoserine. Basic and acidic residues predominate over residues 37-50; the sequence is DVEGKTECEGKRED. The span at 51-64 shows a compositional bias: acidic residues; that stretch reads EGEPGDEGQLEDEG. At S65 the chain carries Phosphoserine. 3 stretches are compositionally biased toward basic and acidic residues: residues 65–80, 96–107, and 115–154; these read SQEK…KPQG, AAEKRPAEDYVP, and DRGT…EELR.

It belongs to the TFS-II family. TFA subfamily.

Its subcellular location is the nucleus. Its function is as follows. May be involved in transcriptional regulation. The sequence is that of Transcription elongation factor A protein-like 3 (TCEAL3) from Homo sapiens (Human).